Reading from the N-terminus, the 240-residue chain is Protein unc-119 homolog A (240 aa).

A compositionally biased stretch (gly residues) spans 1–12; the sequence is MKVKKGGGGAGT. The segment at 1 to 61 is disordered; that stretch reads MKVKKGGGGA…GPLQRKQRIG (61 aa). The span at 13-23 shows a compositional bias: low complexity; sequence GAEPASGAPGP. Residues Ser-37, Ser-39, and Ser-41 each carry the phosphoserine; by CK2 modification. Tyr-131 is a binding site for tetradecanoate.

Belongs to the PDE6D/unc-119 family. In terms of assembly, interacts with CABP4; in the absence of calcium. May interact with GTP-bound ARL1. Interacts with ARL2 and ARL3 (GTP-bound forms); this promotes the release of myristoylated cargo proteins. Found in a complex with ARL3, RP2 and UNC119; RP2 induces hydrolysis of GTP ARL3 in the complex, leading to the release of UNC119. Interacts with NPHP3 (when myristoylated). Interacts with CYS1 (when myristoylated). Interacts with MACIR; interaction only takes place when UNC119 is not liganded with myristoylated proteins. Interacts with LCK; this interaction plays a crucial role in activation of LCK. Interacts with FYN. Interacts with RAB11A; in a cell cycle-dependent manner. Interacts with LYN (via SH2 and SH3 domains); leading to LYN activation. Interacts with DNM1; leading to a decrease of DNM1 GTPase activity. Found in a complex with ABL1, ABL2, CRK and UNC119; leading to the inhibition of CRK phosphorylation by ABL kinases. Interacts with CD44. Interacts with KLHL18 (via kelch repeats). Interacts with PPP3CA, PPP3CB and PPP3CC. Interacts with USP48; this interaction promotes UNC119 stability. In terms of processing, phosphorylation suppresses its interaction with KLHL18 and down-regulates its KLHL18-mediated degradation. Phosphorylated more under light conditions than dark conditions. Dephosphorylated by calcineurin.

The protein resides in the cytoplasm. The protein localises to the cytoskeleton. Its subcellular location is the microtubule organizing center. It localises to the centrosome. It is found in the spindle. The protein resides in the spindle pole. Involved in synaptic functions in photoreceptor cells, the signal transduction in immune cells as a Src family kinase activator, endosome recycling, the uptake of bacteria and endocytosis, protein trafficking in sensory neurons and as lipid-binding chaperone with specificity for a diverse subset of myristoylated proteins. Specifically binds the myristoyl moiety of a subset of N-terminally myristoylated proteins and is required for their localization. Binds myristoylated GNAT1 and is required for G-protein localization and trafficking in sensory neurons. Probably plays a role in trafficking proteins in photoreceptor cells. Plays important roles in mediating Src family kinase signals for the completion of cytokinesis via RAB11A. The chain is Protein unc-119 homolog A (UNC119) from Canis lupus familiaris (Dog).